The chain runs to 1770 residues: MKFMSATAVFAAALSSVTEASSIQDQIKNTDCNVSKLGYSTSQAFTDMMLADNTEYRAADSVSFYDFSTSSRLPRKHLSSSSEASPTTEGVSSSSSGETDEKTEEELDNGGIIYAREKLTISESQDSLSNQSIELHDNSIFFGEGEVIFDHRVALKNGGAIYGEKEVVFENIKSLLVEVNIAVEKGGSVYAKERVSLENVTEATFSSNGGEQGGGGIYSEQDMLISDCNNVHFQGNAAGATAVKQCLDEEMIVLLAECVDSLSEDTLDSTPETEQTESNGNQDGSSETEDTQVSESPESTPSPDDVLGKGGGIYTEKSLTITGITGTIDFVSNIATDSGAGVFTKENLSCTNTNSLQFLKNSAGQHGGGAYVTQTMSVTNTTSESITTPPLIGEVIFSENTAKGHGGGICTNKLSLSNLKTVTLTKNSAKESGGAIFTDLASIPITDTPESSTPSSSSPASTPEVVASAKINRFFASTAKPAAPSLTEAESDQTDQTETSDTNSDIDVSIENILNVAINQNTSAKKGGAIYGKKAKLSRINNLELSGNSSQDVGGGLCLTESVEFDAIGSLLSHYNSAAKEGGAIHSKTVTLSNLKSTFTFADNTVKAIVESTPEAPEEIPPVEGEESTATEDPNSNTEGSSANTNLEGSQGDTADTGTGDVNNESQDTSDTGNAESEEQLQDSTQSNEENTLPNSNIDQSNENTDESSDSHTEEITDESVSSSSESGSSTPQDGGAASSGAPSGDQSISANACLAKSYAASTDSSPVSNSSGSEEPVTSSSDSDVTASSDNPDSSSSGDSAGDSEEPTEPEAGSTTETLTLIGGGAIYGETVKIENFSGQGIFSGNKAIDNTTEGSSSKSDVLGGAVYAKTLFNLDSGSSRRTVTFSGNTVSSQSTTGQVAGGAIYSPTVTIATPVVFSKNSATNNANNTTDTQRKDTFGGAIGATSAVSLSGGAHFLENVADLGSAIGLVPGTQNTETVKLESGSYYFEKNKALKRATIYAPVVSIKAYTATFNQNRSLEEGSAIYFTKEASIESLGSVLFTGNLVTLTLSTTTEGTPATTSGDVTKYGAAIFGQIASSNGSQTDNLPLKLIASGGNICFRNNEYRPTSSDTGTSTFCSIAGDVKLTMQAAKGKTISFFDAIRTSTKKTGTQATAYDTLDINKSEDSETVNSAFTGTILFSSELHENKSYIPQNVVLHSGSLVLKPNTELHVISFEQKEGSSLVMTPGSVLSNQTVADGALVINNMTIDLSSVEKNGIAEGNIFTPPELRIIDTTTGGSGGTPSTDSESNQNSDDTEEQNNNDASNQGESANGSSSPAVAAAHTSRTRNFAAAATATPTTTPTATTTTSNQVILGGEIKLIDPNGTFFQNPALRSDQQISLLVLPTDSSKMQAQKIVLTGDIAPQKGYTGTLTLDPDQLQNGTISVLWKFDSYRQWAYVPRDNHFYANSILGSQMLMVTVKQGLLNDKMNLARFEEVSYNNLWISGLGTMLSQVGTPTSEEFTYYSRGASVALDAKPAHDVIVGAAFSKMIGKTKSLKRENNYTHKGSEYSYQASVYGGKPFHFVINKKTEKSLPLLLQGVISYGYIKHDTVTHYPTIRERNKGEWEDLGWLTALRVSSVLRTPAQGDTKRITVYGELEYSSIRQKQFTETEYDPRYFDNCTYRNLAIPMGLAFEGELSGNDILMYNRFSVAYMLSIYRNSPTCKYQVLSSGEGGEIICGVPTRNSARGEYSTQLYLGPLWTLYGSYTIEADAHTLAHMMNCGARMTF.

The N-terminal stretch at 1 to 20 is a signal peptide; that stretch reads MKFMSATAVFAAALSSVTEA. Disordered regions lie at residues 73–109, 264–311, 481–505, 611–818, and 1271–1329; these read LPRKHLSSSSEASPTTEGVSSSSSGETDEKTEEELDN, EDTL…GKGG, PAAPSLTEAESDQTDQTETSDTNSD, ESTP…STTE, and LRII…TSRT. Low complexity predominate over residues 85-97; it reads SPTTEGVSSSSSG. A compositionally biased stretch (polar residues) spans 268–285; sequence DSTPETEQTESNGNQDGS. 2 stretches are compositionally biased toward low complexity: residues 294–303 and 496–505; these read SESPESTPSP and QTETSDTNSD. 2 stretches are compositionally biased toward polar residues: residues 631–675 and 682–703; these read TEDP…TGNA and QDSTQSNEENTLPNSNIDQSNE. Low complexity-rich tracts occupy residues 719–748 and 762–802; these read ESVSSSSESGSSTPQDGGAASSGAPSGDQS and STDS…GDSA. The segment covering 1303–1319 has biased composition (polar residues); that stretch reads NNDASNQGESANGSSSP. Residues 1477 to 1770 form the Autotransporter domain; it reads EEVSYNNLWI…MMNCGARMTF (294 aa).

This sequence belongs to the PMP outer membrane protein family.

Its subcellular location is the secreted. It is found in the cell wall. It localises to the cell outer membrane. In Chlamydia trachomatis serovar D (strain ATCC VR-885 / DSM 19411 / UW-3/Cx), this protein is Probable outer membrane protein PmpC (pmpC).